Consider the following 87-residue polypeptide: Putative defensin-like protein 238 (87 aa).

The N-terminal stretch at 1–23 is a signal peptide; that stretch reads MRSITWFIVFCVFMFIALNHVKG. 4 disulfides stabilise this stretch: cysteine 30–cysteine 87, cysteine 40–cysteine 65, cysteine 48–cysteine 78, and cysteine 63–cysteine 80.

The protein belongs to the DEFL family.

It localises to the secreted. The polypeptide is Putative defensin-like protein 238 (SCRL16) (Arabidopsis thaliana (Mouse-ear cress)).